Consider the following 883-residue polypeptide: Copper-transporting ATPase PAA2, chloroplastic (883 aa).

A chloroplast-targeting transit peptide spans Met1–Ser65. In terms of domain architecture, HMA spans Thr76–Lys146. Cu cation contacts are provided by Cys87 and Cys90. The next 6 membrane-spanning stretches (helical) occupy residues Val179–His199, Gly209–Leu229, Met250–Val270, Leu274–Gly294, Ala445–Trp465, and Val499–Gly519. The active-site 4-aspartylphosphate intermediate is Asp548. Position 761 to 768 (Gly761 to Pro768) interacts with ATP. Residues Asp762 and Asp766 each coordinate Mg(2+). Transmembrane regions (helical) follow at residues Leu822 to Pro842 and Phe846 to Ser866.

This sequence belongs to the cation transport ATPase (P-type) (TC 3.A.3) family. Type IB subfamily. In terms of tissue distribution, expressed in the shoots only and not in the roots.

The protein localises to the plastid. It localises to the chloroplast thylakoid membrane. It carries out the reaction Cu(2+)(in) + ATP + H2O = Cu(2+)(out) + ADP + phosphate + H(+). Functionally, mediates copper transfer across the chloroplast thylakoid membrane. Required for copper delivery into the thylakoids lumen, which is essential for the function of copper proteins. This chain is Copper-transporting ATPase PAA2, chloroplastic (PAA2), found in Arabidopsis thaliana (Mouse-ear cress).